The chain runs to 176 residues: NAD(P)H-quinone oxidoreductase subunit 6, chloroplastic (176 aa).

5 helical membrane passes run 10 to 30, 32 to 52, 61 to 81, 92 to 112, and 152 to 172; these read FLLV…VLLT, PIFS…FFSL, AQLL…VMFM, LWTV…ISLI, and FFLP…GAIA.

The protein belongs to the complex I subunit 6 family. As to quaternary structure, NDH is composed of at least 16 different subunits, 5 of which are encoded in the nucleus.

It is found in the plastid. The protein resides in the chloroplast thylakoid membrane. It carries out the reaction a plastoquinone + NADH + (n+1) H(+)(in) = a plastoquinol + NAD(+) + n H(+)(out). It catalyses the reaction a plastoquinone + NADPH + (n+1) H(+)(in) = a plastoquinol + NADP(+) + n H(+)(out). Its function is as follows. NDH shuttles electrons from NAD(P)H:plastoquinone, via FMN and iron-sulfur (Fe-S) centers, to quinones in the photosynthetic chain and possibly in a chloroplast respiratory chain. The immediate electron acceptor for the enzyme in this species is believed to be plastoquinone. Couples the redox reaction to proton translocation, and thus conserves the redox energy in a proton gradient. This is NAD(P)H-quinone oxidoreductase subunit 6, chloroplastic (ndhG) from Oenothera argillicola (Appalachian evening primrose).